A 353-amino-acid polypeptide reads, in one-letter code: Photosystem II protein D1 (353 aa).

T2 carries the post-translational modification N-acetylthreonine. T2 carries the post-translational modification Phosphothreonine. 3 helical membrane passes run 29–46, 118–133, and 142–156; these read YIGW…TATS, HFLL…EWEL, and WIAV…AAAA. H118 contacts chlorophyll a. Y126 serves as a coordination point for pheophytin a. D170 and E189 together coordinate [CaMn4O5] cluster. The helical transmembrane segment at 197–218 threads the bilayer; it reads FHMLGVAGVFGGSLFSAMHGSL. Residue H198 participates in chlorophyll a binding. A quinone contacts are provided by residues H215 and 264–265; that span reads SF. Fe cation is bound at residue H215. H272 is a Fe cation binding site. The helical transmembrane segment at 274–288 threads the bilayer; it reads FLAAWPVVGIWFTAL. Positions 332, 333, 342, and 344 each coordinate [CaMn4O5] cluster. Positions 345–353 are excised as a propeptide; it reads AVEAPSING.

Belongs to the reaction center PufL/M/PsbA/D family. PSII is composed of 1 copy each of membrane proteins PsbA, PsbB, PsbC, PsbD, PsbE, PsbF, PsbH, PsbI, PsbJ, PsbK, PsbL, PsbM, PsbT, PsbX, PsbY, PsbZ, Psb30/Ycf12, at least 3 peripheral proteins of the oxygen-evolving complex and a large number of cofactors. It forms dimeric complexes. The D1/D2 heterodimer binds P680, chlorophylls that are the primary electron donor of PSII, and subsequent electron acceptors. It shares a non-heme iron and each subunit binds pheophytin, quinone, additional chlorophylls, carotenoids and lipids. D1 provides most of the ligands for the Mn4-Ca-O5 cluster of the oxygen-evolving complex (OEC). There is also a Cl(-1) ion associated with D1 and D2, which is required for oxygen evolution. The PSII complex binds additional chlorophylls, carotenoids and specific lipids. is required as a cofactor. Post-translationally, tyr-161 forms a radical intermediate that is referred to as redox-active TyrZ, YZ or Y-Z. C-terminally processed by CTPA; processing is essential to allow assembly of the oxygen-evolving complex and thus photosynthetic growth.

The protein resides in the plastid. It is found in the chloroplast thylakoid membrane. It carries out the reaction 2 a plastoquinone + 4 hnu + 2 H2O = 2 a plastoquinol + O2. Functionally, photosystem II (PSII) is a light-driven water:plastoquinone oxidoreductase that uses light energy to abstract electrons from H(2)O, generating O(2) and a proton gradient subsequently used for ATP formation. It consists of a core antenna complex that captures photons, and an electron transfer chain that converts photonic excitation into a charge separation. The D1/D2 (PsbA/PsbD) reaction center heterodimer binds P680, the primary electron donor of PSII as well as several subsequent electron acceptors. This Vitis vinifera (Grape) protein is Photosystem II protein D1.